A 136-amino-acid polypeptide reads, in one-letter code: Probable glycine cleavage system H protein 3 (136 aa).

The 82-residue stretch at 28-109 (MVTVGITSLG…PYDAWIVKIK (82 aa)) folds into the Lipoyl-binding domain. Residue Lys69 is modified to N6-lipoyllysine.

It belongs to the GcvH family. The glycine cleavage system is composed of four proteins: P, T, L and H. Requires (R)-lipoate as cofactor.

The glycine cleavage system catalyzes the degradation of glycine. The H protein shuttles the methylamine group of glycine from the P protein to the T protein. The sequence is that of Probable glycine cleavage system H protein 3 from Sulfurisphaera tokodaii (strain DSM 16993 / JCM 10545 / NBRC 100140 / 7) (Sulfolobus tokodaii).